A 518-amino-acid polypeptide reads, in one-letter code: Cyclin-L2 (518 aa).

2 cyclin-like regions span residues 81–183 and 196–280; these read ELIQ…RVLK and KIIV…KILQ. The tract at residues 310-518 is disordered; the sequence is AKGLLPGTAP…DHPGHSRHRR (209 aa). Residues S328, S335, S345, S348, and S366 each carry the phosphoserine modification. The segment at 382–420 is RS; the sequence is RSREQSYSRSPSRSASPKRRKSDSGSTSGGSKSQSRSRS. Residues 405 to 427 are compositionally biased toward low complexity; sequence SGSTSGGSKSQSRSRSRSDSPPR. A compositionally biased stretch (basic and acidic residues) spans 438-450; it reads SEVRGSRKSKDCK. Residues 455-469 show a composition bias toward basic residues; the sequence is KPHKSRSRSSSRSRS. Composition is skewed to basic and acidic residues over residues 470 to 479 and 487 to 512; these read RSRERTDNSG and YYRDQRRERSRSYERTGHRYERDHPG.

Belongs to the cyclin family. Cyclin L subfamily. Interacts with CDK11A, CDK11B, CDK12, CDK13 and POLR2A, the hyperphosphorylated C-terminal domain (CTD) of RNA polymerase II. May form a ternary complex with CDK11B and casein kinase II (CKII). Interacts with pre-mRNA-splicing factors, including at least SRSF1, SRSF2 and SRSF7/SLU7. As to expression, widely expressed (at protein level).

It localises to the nucleus speckle. Its subcellular location is the nucleus. It is found in the nucleoplasm. Involved in pre-mRNA splicing. May induce cell death, possibly by acting on the transcription and RNA processing of apoptosis-related factors. The chain is Cyclin-L2 (Ccnl2) from Mus musculus (Mouse).